Reading from the N-terminus, the 559-residue chain is Potassium-transporting ATPase potassium-binding subunit (559 aa).

Transmembrane regions (helical) follow at residues 5–25, 27–47, 63–83, 132–152, 170–190, 253–273, 283–303, 327–347, 356–376, 379–399, 416–436, 484–504, and 524–544; these read GFLLNASFLLILLVLAKPLGS, LARLIAAVPLPGVAGVERILW, LLALLTLNLLGLGILFCLLFW, GLTVQNFLSAATGIAVVFALI, LVRITLWILFPVALIIALFFI, LAQMLAIFLIPAALCFAFGEA, LLWAMSFIFVVCVAVVMWAEV, FGVLASSLFAVVTTAASCGAV, ALGGMVPMWLMQIGEVVFGGV, GLYGMLLFVLLAVFIAGLMIG, MTALAILVTPMLVLLGSALAM, LLAFCMFVGRFGVIIPVMAIA, and GALFIGLLIGTVLLVGALTFI.

It belongs to the KdpA family. In terms of assembly, the system is composed of three essential subunits: KdpA, KdpB and KdpC.

It is found in the cell inner membrane. In terms of biological role, part of the high-affinity ATP-driven potassium transport (or Kdp) system, which catalyzes the hydrolysis of ATP coupled with the electrogenic transport of potassium into the cytoplasm. This subunit binds the periplasmic potassium ions and delivers the ions to the membrane domain of KdpB through an intramembrane tunnel. The protein is Potassium-transporting ATPase potassium-binding subunit of Salmonella newport (strain SL254).